Reading from the N-terminus, the 872-residue chain is Alanine--tRNA ligase (872 aa).

Zn(2+) contacts are provided by histidine 567, histidine 571, cysteine 669, and histidine 673.

This sequence belongs to the class-II aminoacyl-tRNA synthetase family. It depends on Zn(2+) as a cofactor.

Its subcellular location is the cytoplasm. It carries out the reaction tRNA(Ala) + L-alanine + ATP = L-alanyl-tRNA(Ala) + AMP + diphosphate. Functionally, catalyzes the attachment of alanine to tRNA(Ala) in a two-step reaction: alanine is first activated by ATP to form Ala-AMP and then transferred to the acceptor end of tRNA(Ala). Also edits incorrectly charged Ser-tRNA(Ala) and Gly-tRNA(Ala) via its editing domain. In Streptococcus pyogenes serotype M2 (strain MGAS10270), this protein is Alanine--tRNA ligase.